A 133-amino-acid polypeptide reads, in one-letter code: Small ribosomal subunit protein uS8 (133 aa).

It belongs to the universal ribosomal protein uS8 family. As to quaternary structure, part of the 30S ribosomal subunit. Contacts proteins S5 and S12.

One of the primary rRNA binding proteins, it binds directly to 16S rRNA central domain where it helps coordinate assembly of the platform of the 30S subunit. The polypeptide is Small ribosomal subunit protein uS8 (Trichormus variabilis (strain ATCC 29413 / PCC 7937) (Anabaena variabilis)).